A 205-amino-acid chain; its full sequence is Methylthioribulose-1-phosphate dehydratase (205 aa).

The Zn(2+) site is built by His96 and His98.

The protein belongs to the aldolase class II family. MtnB subfamily. The cofactor is Zn(2+).

The enzyme catalyses 5-(methylsulfanyl)-D-ribulose 1-phosphate = 5-methylsulfanyl-2,3-dioxopentyl phosphate + H2O. It functions in the pathway amino-acid biosynthesis; L-methionine biosynthesis via salvage pathway; L-methionine from S-methyl-5-thio-alpha-D-ribose 1-phosphate: step 2/6. In terms of biological role, catalyzes the dehydration of methylthioribulose-1-phosphate (MTRu-1-P) into 2,3-diketo-5-methylthiopentyl-1-phosphate (DK-MTP-1-P). The sequence is that of Methylthioribulose-1-phosphate dehydratase from Pseudomonas aeruginosa (strain UCBPP-PA14).